We begin with the raw amino-acid sequence, 206 residues long: Thiamine-phosphate synthase (206 aa).

Residues 35-39 and Asn67 each bind 4-amino-2-methyl-5-(diphosphooxymethyl)pyrimidine; that span reads QLRDK. Mg(2+) contacts are provided by Asp68 and Asp87. Residue Ser106 coordinates 4-amino-2-methyl-5-(diphosphooxymethyl)pyrimidine. 132-134 serves as a coordination point for 2-[(2R,5Z)-2-carboxy-4-methylthiazol-5(2H)-ylidene]ethyl phosphate; that stretch reads TGT. A 4-amino-2-methyl-5-(diphosphooxymethyl)pyrimidine-binding site is contributed by Lys135. 2-[(2R,5Z)-2-carboxy-4-methylthiazol-5(2H)-ylidene]ethyl phosphate is bound by residues Gly163 and 183–184; that span reads IS.

It belongs to the thiamine-phosphate synthase family. Mg(2+) is required as a cofactor.

The catalysed reaction is 2-[(2R,5Z)-2-carboxy-4-methylthiazol-5(2H)-ylidene]ethyl phosphate + 4-amino-2-methyl-5-(diphosphooxymethyl)pyrimidine + 2 H(+) = thiamine phosphate + CO2 + diphosphate. It carries out the reaction 2-(2-carboxy-4-methylthiazol-5-yl)ethyl phosphate + 4-amino-2-methyl-5-(diphosphooxymethyl)pyrimidine + 2 H(+) = thiamine phosphate + CO2 + diphosphate. It catalyses the reaction 4-methyl-5-(2-phosphooxyethyl)-thiazole + 4-amino-2-methyl-5-(diphosphooxymethyl)pyrimidine + H(+) = thiamine phosphate + diphosphate. It participates in cofactor biosynthesis; thiamine diphosphate biosynthesis; thiamine phosphate from 4-amino-2-methyl-5-diphosphomethylpyrimidine and 4-methyl-5-(2-phosphoethyl)-thiazole: step 1/1. In terms of biological role, condenses 4-methyl-5-(beta-hydroxyethyl)thiazole monophosphate (THZ-P) and 2-methyl-4-amino-5-hydroxymethyl pyrimidine pyrophosphate (HMP-PP) to form thiamine monophosphate (TMP). In Methanospirillum hungatei JF-1 (strain ATCC 27890 / DSM 864 / NBRC 100397 / JF-1), this protein is Thiamine-phosphate synthase.